Consider the following 299-residue polypeptide: Ribosomal protein uL3 glutamine methyltransferase (299 aa).

It belongs to the protein N5-glutamine methyltransferase family. PrmB subfamily.

It carries out the reaction L-glutaminyl-[ribosomal protein uL3] + S-adenosyl-L-methionine = N(5)-methyl-L-glutaminyl-[ribosomal protein uL3] + S-adenosyl-L-homocysteine + H(+). Functionally, methylates large ribosomal subunit protein uL3 on a specific glutamine residue. The chain is Ribosomal protein uL3 glutamine methyltransferase from Neisseria gonorrhoeae (strain ATCC 700825 / FA 1090).